The primary structure comprises 376 residues: Chaperone protein DnaJ (376 aa).

A J domain is found at 4–68; sequence DYYEILGVAR…ETRARYDRFG (65 aa). The disordered stretch occupies residues 102–121; it reads GGMGGPTQQRRRGGPARGDD. The CR-type zinc finger occupies 136-218; the sequence is GGEKEIRISH…CDGKGTNQVT (83 aa). Residues cysteine 149, cysteine 152, cysteine 166, cysteine 169, cysteine 192, cysteine 195, cysteine 206, and cysteine 209 each contribute to the Zn(2+) site. CXXCXGXG motif repeat units follow at residues 149–156, 166–173, 192–199, and 206–213; these read CETCSGSG, CSTCSGSG, CPTCNGTG, and CDACDGKG.

The protein belongs to the DnaJ family. Homodimer. It depends on Zn(2+) as a cofactor.

The protein localises to the cytoplasm. Participates actively in the response to hyperosmotic and heat shock by preventing the aggregation of stress-denatured proteins and by disaggregating proteins, also in an autonomous, DnaK-independent fashion. Unfolded proteins bind initially to DnaJ; upon interaction with the DnaJ-bound protein, DnaK hydrolyzes its bound ATP, resulting in the formation of a stable complex. GrpE releases ADP from DnaK; ATP binding to DnaK triggers the release of the substrate protein, thus completing the reaction cycle. Several rounds of ATP-dependent interactions between DnaJ, DnaK and GrpE are required for fully efficient folding. Also involved, together with DnaK and GrpE, in the DNA replication of plasmids through activation of initiation proteins. The chain is Chaperone protein DnaJ from Trichormus variabilis (strain ATCC 29413 / PCC 7937) (Anabaena variabilis).